Consider the following 517-residue polypeptide: GMP synthase [glutamine-hydrolyzing] (517 aa).

A Glutamine amidotransferase type-1 domain is found at 11–202 (KIIVLDYGSQ…AFGVCGAQDN (192 aa)). Cys88 (nucleophile) is an active-site residue. Active-site residues include His176 and Glu178. The GMPS ATP-PPase domain maps to 203-392 (WTMNDFIDMQ…LGMPYELVWR (190 aa)). 230–236 (SGGVDSS) provides a ligand contact to ATP.

Homodimer.

The enzyme catalyses XMP + L-glutamine + ATP + H2O = GMP + L-glutamate + AMP + diphosphate + 2 H(+). The protein operates within purine metabolism; GMP biosynthesis; GMP from XMP (L-Gln route): step 1/1. Catalyzes the synthesis of GMP from XMP. The protein is GMP synthase [glutamine-hydrolyzing] of Latilactobacillus sakei subsp. sakei (strain 23K) (Lactobacillus sakei subsp. sakei).